Here is a 201-residue protein sequence, read N- to C-terminus: Recombination protein RecR (201 aa).

The segment at 60–75 adopts a C4-type zinc-finger fold; it reads CSVCGNIDTTDPCSIC. The Toprim domain maps to 83–178; sequence GTIIVVEDIS…KITRLAHGVP (96 aa).

The protein belongs to the RecR family.

May play a role in DNA repair. It seems to be involved in an RecBC-independent recombinational process of DNA repair. It may act with RecF and RecO. This Bartonella bacilliformis (strain ATCC 35685 / KC583 / Herrer 020/F12,63) protein is Recombination protein RecR.